The sequence spans 162 residues: uncharacterized protein (162 aa).

Residues 6–24 (SYLISIFYIILITSETTAF) form a helical membrane-spanning segment.

Its subcellular location is the membrane. This is an uncharacterized protein from Caenorhabditis elegans.